The primary structure comprises 253 residues: Phosphoglycerate mutase 2 (253 aa).

Threonine 3 carries the post-translational modification Phosphothreonine. Residues 10–17 (RHGESLWN), 23–24 (CG), arginine 62, 89–92 (ERHY), lysine 100, and 116–117 (RR) each bind substrate. Catalysis depends on histidine 11, which acts as the Tele-phosphohistidine intermediate. Residue serine 14 is modified to Phosphoserine. Residue glutamate 89 is the Proton donor/acceptor of the active site. Position 118 is a phosphoserine (serine 118). Threonine 121 is modified (phosphothreonine). 2 positions are modified to phosphotyrosine: tyrosine 132 and tyrosine 133. Serine 135 carries the post-translational modification Phosphoserine. The residue at position 152 (threonine 152) is a Phosphothreonine. Residue 187-188 (GN) participates in substrate binding.

Belongs to the phosphoglycerate mutase family. BPG-dependent PGAM subfamily. As to quaternary structure, homodimer. Interacts with ENO1. In terms of tissue distribution, expressed in the testes (at protein level).

It catalyses the reaction (2R)-2-phosphoglycerate = (2R)-3-phosphoglycerate. The enzyme catalyses (2R)-3-phospho-glyceroyl phosphate = (2R)-2,3-bisphosphoglycerate + H(+). Interconversion of 3- and 2-phosphoglycerate with 2,3-bisphosphoglycerate as the primer of the reaction. Can also catalyze the reaction of EC 5.4.2.4 (synthase), but with a reduced activity. The protein is Phosphoglycerate mutase 2 (Pgam2) of Mus musculus (Mouse).